Reading from the N-terminus, the 87-residue chain is Cell division protein ZapA (87 aa).

Residues 64–87 are a coiled coil; that stretch reads VHDYIKLKEEYDRLLQKLHKEKDE.

This sequence belongs to the ZapA family. Type 2 subfamily. Homodimer. Interacts with FtsZ.

The protein localises to the cytoplasm. Functionally, activator of cell division through the inhibition of FtsZ GTPase activity, therefore promoting FtsZ assembly into bundles of protofilaments necessary for the formation of the division Z ring. It is recruited early at mid-cell but it is not essential for cell division. In Geobacillus sp. (strain WCH70), this protein is Cell division protein ZapA.